Reading from the N-terminus, the 121-residue chain is Putative membrane protein insertion efficiency factor (121 aa).

It belongs to the UPF0161 family.

The protein resides in the cell inner membrane. Functionally, could be involved in insertion of integral membrane proteins into the membrane. This is Putative membrane protein insertion efficiency factor from Rhodopseudomonas palustris (strain HaA2).